We begin with the raw amino-acid sequence, 482 residues long: Probable glycine dehydrogenase (decarboxylating) subunit 2 (482 aa).

An N6-(pyridoxal phosphate)lysine modification is found at lysine 264.

It belongs to the GcvP family. C-terminal subunit subfamily. As to quaternary structure, the glycine cleavage system is composed of four proteins: P, T, L and H. In this organism, the P 'protein' is a heterodimer of two subunits. Requires pyridoxal 5'-phosphate as cofactor.

It catalyses the reaction N(6)-[(R)-lipoyl]-L-lysyl-[glycine-cleavage complex H protein] + glycine + H(+) = N(6)-[(R)-S(8)-aminomethyldihydrolipoyl]-L-lysyl-[glycine-cleavage complex H protein] + CO2. In terms of biological role, the glycine cleavage system catalyzes the degradation of glycine. The P protein binds the alpha-amino group of glycine through its pyridoxal phosphate cofactor; CO(2) is released and the remaining methylamine moiety is then transferred to the lipoamide cofactor of the H protein. The chain is Probable glycine dehydrogenase (decarboxylating) subunit 2 from Treponema denticola (strain ATCC 35405 / DSM 14222 / CIP 103919 / JCM 8153 / KCTC 15104).